The following is a 297-amino-acid chain: N-acetylmuramic acid 6-phosphate etherase (297 aa).

An SIS domain is found at 55 to 218; the sequence is AAKRYSKGGR…STGVMIKQGK (164 aa). Residue Glu83 is the Proton donor of the active site. Glu114 is a catalytic residue.

This sequence belongs to the GCKR-like family. MurNAc-6-P etherase subfamily. Homodimer.

The catalysed reaction is N-acetyl-D-muramate 6-phosphate + H2O = N-acetyl-D-glucosamine 6-phosphate + (R)-lactate. It functions in the pathway amino-sugar metabolism; N-acetylmuramate degradation. Specifically catalyzes the cleavage of the D-lactyl ether substituent of MurNAc 6-phosphate, producing GlcNAc 6-phosphate and D-lactate. This chain is N-acetylmuramic acid 6-phosphate etherase, found in Lactobacillus gasseri (strain ATCC 33323 / DSM 20243 / BCRC 14619 / CIP 102991 / JCM 1131 / KCTC 3163 / NCIMB 11718 / NCTC 13722 / AM63).